The primary structure comprises 135 residues: MAALRPLTKPKIVKKRTKKFIRHQSDRYVKIRRNWRKPRGIDNRVRSGFKGQMLMPNIGYGSNKKTKHMLPSGFKKFLVHNVKELEVLLMSNKSYCAEIAHNVSSKNRKVIVERAAQLAIKVTNPNARLRSEENE.

Belongs to the eukaryotic ribosomal protein eL32 family. In terms of assembly, component of the large ribosomal subunit.

Its subcellular location is the cytoplasm. Component of the large ribosomal subunit. The ribosome is a large ribonucleoprotein complex responsible for the synthesis of proteins in the cell. The protein is Large ribosomal subunit protein eL32 (rpl32) of Ictalurus punctatus (Channel catfish).